The sequence spans 457 residues: Na(+)/H(+) antiporter NhaA (457 aa).

The next 11 membrane-spanning stretches (helical) occupy residues 33–53 (ASGI…NSPL), 76–96 (FSLA…VVGM), 114–134 (LLPL…FLAF), 142–162 (AGWG…LTLL), 172–192 (VFVT…IALF), 196–216 (GLQL…ALMS), 235–255 (YALH…GLAI), 308–328 (FVHA…ALAN), 349–369 (TALA…WIAV), 385–405 (LIGV…IAGL), and 419–439 (VGIL…LRLT).

It belongs to the NhaA Na(+)/H(+) (TC 2.A.33) antiporter family.

It is found in the cell inner membrane. The catalysed reaction is Na(+)(in) + 2 H(+)(out) = Na(+)(out) + 2 H(+)(in). Functionally, na(+)/H(+) antiporter that extrudes sodium in exchange for external protons. The polypeptide is Na(+)/H(+) antiporter NhaA (Anaeromyxobacter sp. (strain Fw109-5)).